The chain runs to 349 residues: tRNA pseudouridine synthase D (349 aa).

Phe27 is a substrate binding site. The active-site Nucleophile is the Asp80. Asn129 is a binding site for substrate. One can recognise a TRUD domain in the interval 155-303 (GVPNYFGAQR…VEAARRAMLL (149 aa)). Position 329 (Phe329) interacts with substrate.

This sequence belongs to the pseudouridine synthase TruD family.

The enzyme catalyses uridine(13) in tRNA = pseudouridine(13) in tRNA. Its function is as follows. Responsible for synthesis of pseudouridine from uracil-13 in transfer RNAs. This Escherichia coli O9:H4 (strain HS) protein is tRNA pseudouridine synthase D.